A 266-amino-acid chain; its full sequence is Pyrrolizixenacetamide deacetylase (266 aa).

An acetate-binding site is contributed by T28. S94 serves as the catalytic Nucleophile. L95 provides a ligand contact to acetate. Residues D215 and H242 each act as charge relay system in the active site. H242 contributes to the acetate binding site.

The protein belongs to the AB hydrolase superfamily. In terms of assembly, homodimer.

The catalysed reaction is pyrrolizixenacetamide + H2O = 3-amino-5,6,7,7a-tetrahydro-1H-pyrrolizin-1-one + acetate + H(+). In terms of biological role, involved in the biosynthetic pathway of pyrrolizwilline, a pyrrolizidine alkaloid. Catalyzes the N-deacetylation of pyrrolizixenacetamide. The chain is Pyrrolizixenacetamide deacetylase from Xenorhabdus hominickii.